Here is a 308-residue protein sequence, read N- to C-terminus: Growth/differentiation factor 15 (308 aa).

The first 29 residues, 1 to 29 (MPGQELRTVNGSQMLLVLLVLSWLPHGGA), serve as a signal peptide directing secretion. The propeptide occupies 30-194 (LSLAEASRAS…RPQAARGRRR (165 aa)). An N-linked (GlcNAc...) asparagine glycan is attached at Asn70. Residues 152 to 177 (APALHLRLSPPPSQSDQLLAESSSAR) form a disordered region. A compositionally biased stretch (polar residues) spans 165–177 (QSDQLLAESSSAR). Cystine bridges form between Cys203-Cys210, Cys211-Cys274, Cys240-Cys305, and Cys244-Cys307.

The protein belongs to the TGF-beta family. Homodimer; disulfide-linked. Interacts with GFRAL and RET; ligand of GFRAL, which mediates GDF15 internalization and cellular signaling through interaction with RET via the formation of a 2:2:2 ternary complex composed of GDF15, GFRAL and RET. As to expression, detected in plasma (at protein level). Highly expressed in placenta, with lower levels in prostate and colon and some expression in kidney.

The protein resides in the secreted. In terms of biological role, hormone produced in response to various stresses to confer information about those stresses to the brain, and trigger an aversive response, characterized by nausea, vomiting, and/or loss of appetite. The aversive response is both required to reduce continuing exposure to those stresses at the time of exposure and to promote avoidance behavior in the future. Acts by binding to its receptor, GFRAL, activating GFRAL-expressing neurons localized in the area postrema and nucleus tractus solitarius of the brainstem. It then triggers the activation of neurons localized within the parabrachial nucleus and central amygdala, which constitutes part of the 'emergency circuit' that shapes responses to stressful conditions. The GDF15-GFRAL signal induces expression of genes involved in metabolism, such as lipid metabolism in adipose tissues. Required for avoidance behavior in response to food allergens: induced downstream of mast cell activation to promote aversion and minimize harmful effects of exposure to noxious substances. In addition to suppress appetite, also promotes weight loss by enhancing energy expenditure in muscle: acts by increasing calcium futile cycling in muscle. Contributes to the effect of metformin, an anti-diabetic drug, on appetite reduction and weight loss: produced in the kidney in response to metformin treatment, thereby activating the GDF15-GFRAL response, leading to reduced appetite and weight. The contribution of GDF15 to weight loss following metformin treatment is however limited and subject to discussion. Produced in response to anticancer drugs, such as camptothecin or cisplatin, promoting nausea, vomiting and contributing to malnutrition. Overproduced in many cancers, promoting anorexia in cancer (cachexia). Responsible for the risk of nausea and vomiting during pregnancy: high levels of GDF15 during pregnancy, mostly originating from the fetus, are associated with increased nausea and vomiting. Maternal sensitivity to nausea is probably determined by pre-pregnancy exposure to GDF15, women with naturally high level of GDF15 being less susceptible to nausea than women with low levels of GDF15 before pregnancy. Promotes metabolic adaptation in response to systemic inflammation caused by bacterial and viral infections in order to promote tissue tolerance and prevent tissue damage. Required for tissue tolerance in response to myocardial infarction by acting as an inhibitor of leukocyte integring activation, thereby protecting against cardiac rupture. Inhibits growth hormone signaling on hepatocytes. In Homo sapiens (Human), this protein is Growth/differentiation factor 15.